The following is a 345-amino-acid chain: Selenide, water dikinase (345 aa).

Residue Cys16 is part of the active site. ATP-binding positions include Lys19 and 46–48; that span reads TSD. Asp49 provides a ligand contact to Mg(2+). Residues Asp66, Asp89, and 136 to 138 contribute to the ATP site; that span reads GHT. Position 89 (Asp89) interacts with Mg(2+). Residue Asp224 coordinates Mg(2+).

This sequence belongs to the selenophosphate synthase 1 family. Class I subfamily. Homodimer. It depends on Mg(2+) as a cofactor.

The enzyme catalyses hydrogenselenide + ATP + H2O = selenophosphate + AMP + phosphate + 2 H(+). Functionally, synthesizes selenophosphate from selenide and ATP. The protein is Selenide, water dikinase of Clostridium botulinum (strain Alaska E43 / Type E3).